Consider the following 88-residue polypeptide: Small ribosomal subunit protein uS15c (88 aa).

Belongs to the universal ribosomal protein uS15 family. Part of the 30S ribosomal subunit.

It localises to the plastid. The protein localises to the chloroplast. The sequence is that of Small ribosomal subunit protein uS15c (rps15) from Arabidopsis thaliana (Mouse-ear cress).